Consider the following 468-residue polypeptide: Protein NEN1 (468 aa).

The Exonuclease domain occupies 11 to 172; it reads FFDVETTVPK…DDVRMNLEVL (162 aa). Residues Asp13 and Glu15 each coordinate Mg(2+). His159 functions as the Proton donor/acceptor in the catalytic mechanism. Asp164 contacts Mg(2+).

The cofactor is Mg(2+). In terms of tissue distribution, expressed in the sieve elements and phloem pole pericycle cells.

The protein resides in the cytoplasm. It localises to the nucleus. Probable exonuclease involved in enuclation of sieve elements. This Arabidopsis thaliana (Mouse-ear cress) protein is Protein NEN1.